A 558-amino-acid polypeptide reads, in one-letter code: Laccase-4 (558 aa).

Positions 1–24 (MGSHMVWFLFLVSFFSVFPAPSES) are cleaved as a signal peptide. Plastocyanin-like domains lie at 32–148 (NVVM…PKRG) and 158–308 (NEKV…YSGT). Residues asparagine 37 and asparagine 78 are each glycosylated (N-linked (GlcNAc...) asparagine). Histidine 82 and histidine 84 together coordinate Cu cation. Asparagine 114 carries an N-linked (GlcNAc...) asparagine glycan. Cu cation-binding residues include histidine 127 and histidine 129. Asparagine 187, asparagine 296, asparagine 323, asparagine 330, asparagine 373, asparagine 383, asparagine 400, asparagine 418, and asparagine 441 each carry an N-linked (GlcNAc...) asparagine glycan. Residues 408–542 (DFPKNPPHVF…KMAFLVENGK (135 aa)) form the Plastocyanin-like 3 domain. Residues histidine 459, histidine 462, and histidine 464 each coordinate Cu cation. Residue asparagine 479 is glycosylated (N-linked (GlcNAc...) asparagine). The Cu cation site is built by histidine 521, cysteine 522, histidine 523, and histidine 527. An N-linked (GlcNAc...) asparagine glycan is attached at asparagine 545.

This sequence belongs to the multicopper oxidase family. The cofactor is Cu cation. In terms of tissue distribution, ubiquitous, with higher levels in the inflorescence stem.

It is found in the secreted. It localises to the extracellular space. Its subcellular location is the apoplast. It catalyses the reaction 4 hydroquinone + O2 = 4 benzosemiquinone + 2 H2O. Its function is as follows. Lignin degradation and detoxification of lignin-derived products. Required for secondary xylem cell wall lignification. This Arabidopsis thaliana (Mouse-ear cress) protein is Laccase-4 (IRX12).